The chain runs to 273 residues: Tryptophan synthase alpha chain (273 aa).

Catalysis depends on proton acceptor residues glutamate 56 and aspartate 67.

It belongs to the TrpA family. In terms of assembly, tetramer of two alpha and two beta chains.

It catalyses the reaction (1S,2R)-1-C-(indol-3-yl)glycerol 3-phosphate + L-serine = D-glyceraldehyde 3-phosphate + L-tryptophan + H2O. Its pathway is amino-acid biosynthesis; L-tryptophan biosynthesis; L-tryptophan from chorismate: step 5/5. Its function is as follows. The alpha subunit is responsible for the aldol cleavage of indoleglycerol phosphate to indole and glyceraldehyde 3-phosphate. This is Tryptophan synthase alpha chain from Shewanella baltica (strain OS185).